The sequence spans 281 residues: Lipoyl synthase (281 aa).

The [4Fe-4S] cluster site is built by Cys-37, Cys-42, Cys-48, Cys-63, Cys-67, Cys-70, and Ser-274. The 215-residue stretch at 49–263 (WSRGTATFMI…RQQAVNKGFK (215 aa)) folds into the Radical SAM core domain.

It belongs to the radical SAM superfamily. Lipoyl synthase family. It depends on [4Fe-4S] cluster as a cofactor.

The protein resides in the cytoplasm. It catalyses the reaction [[Fe-S] cluster scaffold protein carrying a second [4Fe-4S](2+) cluster] + N(6)-octanoyl-L-lysyl-[protein] + 2 oxidized [2Fe-2S]-[ferredoxin] + 2 S-adenosyl-L-methionine + 4 H(+) = [[Fe-S] cluster scaffold protein] + N(6)-[(R)-dihydrolipoyl]-L-lysyl-[protein] + 4 Fe(3+) + 2 hydrogen sulfide + 2 5'-deoxyadenosine + 2 L-methionine + 2 reduced [2Fe-2S]-[ferredoxin]. The protein operates within protein modification; protein lipoylation via endogenous pathway; protein N(6)-(lipoyl)lysine from octanoyl-[acyl-carrier-protein]: step 2/2. Catalyzes the radical-mediated insertion of two sulfur atoms into the C-6 and C-8 positions of the octanoyl moiety bound to the lipoyl domains of lipoate-dependent enzymes, thereby converting the octanoylated domains into lipoylated derivatives. The chain is Lipoyl synthase from Parabacteroides distasonis (strain ATCC 8503 / DSM 20701 / CIP 104284 / JCM 5825 / NCTC 11152).